The primary structure comprises 326 residues: ELAV-like protein 1 (326 aa).

N-acetylserine is present on S2. At S2 the chain carries Phosphoserine. The RRM 1 domain occupies 20 to 98 (TNLIVNYLPQ…KTIKVSYARP (79 aa)). Phosphoserine occurs at positions 100 and 158. Positions 106 to 186 (ANLYISGLPR…EPITVKFAAN (81 aa)) constitute an RRM 2 domain. Residue K191 forms a Glycyl lysine isopeptide (Lys-Gly) (interchain with G-Cter in SUMO2) linkage. A phosphoserine mark is found at S197 and S202. R206 is subject to Omega-N-methylarginine. Asymmetric dimethylarginine; by CARM1; alternate is present on R217. An Omega-N-methylarginine; alternate modification is found at R217. Residues S221 and S318 each carry the phosphoserine modification. An RRM 3 domain is found at 244-322 (WCIFIYNLGQ…KILQVSFKTN (79 aa)).

Belongs to the RRM elav family. Monomer and homodimer (in vitro). Interacts with ANP32A. Interacts with ZNF385A; the interaction is indirect and mRNA-dependent and may regulate p53/TP53 expression. Identified in a mRNP complex, at least composed of DHX9, DDX3X, ELAVL1, HNRNPU, IGF2BP1, ILF3, PABPC1, PCBP2, PTBP2, STAU1, STAU2, SYNCRIP and YBX1. Interacts with AGO1 and AGO2. Interacts with IGF2BP1; the interaction is enhanced by SEPIN14P20 peptide RBPR. Interacts with IGF2BP2 and IGF2BP3. Interacts with HNRNPL. Interacts with DHX36; this interaction occurs in a RNA-dependent manner. Interacts with ILF3; this interaction occurs in a RNA-dependent manner. Interacts with PLEKHN1. Interacts with SHFL; the interaction increases in presence of RNA. Interacts with YBX1; interaction recruits ELAVL1 on C5-methylcytosine (m5C)-containing mRNAs, thereby promoting mRNA stability. Interacts with FXR1. Phosphorylated by MAPKAPK2. Phosphorylated by PRKCD. Post-translationally, methylated at Arg-217 by CARM1 in macrophages in response to LPS challenge. As to expression, ubiquitous. Detected in brain, liver, thymus and muscle.

The protein localises to the cytoplasm. The protein resides in the nucleus. It is found in the stress granule. Its subcellular location is the P-body. Its function is as follows. RNA-binding protein that binds to the 3'-UTR region of mRNAs and increases their stability. Involved in embryonic stem cell (ESC) differentiation: preferentially binds mRNAs that are not methylated by N6-methyladenosine (m6A), stabilizing them, promoting ESC differentiation. Has also been shown to be capable of binding to m6A-containing mRNAs and contributes to MYC stability by binding to m6A-containing MYC mRNAs. Binds to poly-U elements and AU-rich elements (AREs) in the 3'-UTR of target mRNAs. Binds avidly to the AU-rich element in FOS and IL3/interleukin-3 mRNAs. In the case of the FOS AU-rich element, binds to a core element of 27 nucleotides that contain AUUUA, AUUUUA, and AUUUUUA motifs. Binds preferentially to the 5'-UUUU[AG]UUU-3' motif in vitro. With ZNF385A, binds the 3'-UTR of p53/TP53 mRNA to control their nuclear export induced by CDKN2A. Hence, may regulate p53/TP53 expression and mediate in part the CDKN2A anti-proliferative activity. May also bind with ZNF385A the CCNB1 mRNA. Increases the stability of the leptin mRNA harboring an AU-rich element (ARE) in its 3' UTR. The chain is ELAV-like protein 1 (ELAVL1) from Homo sapiens (Human).